Consider the following 163-residue polypeptide: Large ribosomal subunit protein bL17 (163 aa).

Residues 127 to 163 (KEVKKAKSRRGGKAKKAEGTAPEAPAAESESTTEASE) are disordered. Positions 128-140 (EVKKAKSRRGGKA) are enriched in basic residues. Low complexity predominate over residues 145-163 (GTAPEAPAAESESTTEASE).

This sequence belongs to the bacterial ribosomal protein bL17 family. In terms of assembly, part of the 50S ribosomal subunit. Contacts protein L32.

This Flavobacterium johnsoniae (strain ATCC 17061 / DSM 2064 / JCM 8514 / BCRC 14874 / CCUG 350202 / NBRC 14942 / NCIMB 11054 / UW101) (Cytophaga johnsonae) protein is Large ribosomal subunit protein bL17.